Reading from the N-terminus, the 103-residue chain is Large ribosomal subunit protein bL21 (103 aa).

Belongs to the bacterial ribosomal protein bL21 family. Part of the 50S ribosomal subunit. Contacts protein L20.

Its function is as follows. This protein binds to 23S rRNA in the presence of protein L20. This Mycolicibacterium paratuberculosis (strain ATCC BAA-968 / K-10) (Mycobacterium paratuberculosis) protein is Large ribosomal subunit protein bL21.